A 379-amino-acid chain; its full sequence is Putative cyclic ADP-D-ribose synthase TIR2 (379 aa).

The region spanning 254 to 379 (KVYDVFISHS…TISWTTGLVK (126 aa)) is the TIR domain. Residue E335 is part of the active site.

Homodimer.

Its subcellular location is the cytoplasm. Its activity is regulated as follows. Activated upon phage infection. Functionally, one of 2 TIR-like protein components of the Thoeris antiviral defense system, composed of ThsA, TIR1 (thsB1) and TIR2 (thsB2). Phage infection activates this protein; by 70 minutes post-infection with phage SPO1, TIR2 generates a signal molecule that in turn activates the NAD(+) hydrolase activity of ThsA (tested with B.cereus). The signal is similar to cyclic ADP-D-ribose, but how it differs is unknown. Expression of Thoeris in B.subtilis (strain BEST7003) confers resistance to phages phi29, phi3T, SPBeta, SBSphi11, SBSphi13, SBSphiJ, SPO1 and SPR but not SBSphiC. The TIR paralogs confer resistance to different phages; this subunit confers resistance to phi3T, SPBeta, SBSphi13, SBSphiJ, SPO1 and SPR but not phi29, SBSphi11 or SBSphiC. There is overlap in the phage range for this system, both TIR1 and TIR2 are activated by SBSphi13, SBSphiJ, SPO1 and SPR. Probably hydrolyzes NAD(+) to make a cyclic ADP-D-ribose (cADPR) signaling molecule; might make 3'cADPR. The polypeptide is Putative cyclic ADP-D-ribose synthase TIR2 (Cytobacillus dafuensis (Bacillus dafuensis)).